The primary structure comprises 894 residues: Interleukin enhancer-binding factor 3 (894 aa).

The 374-residue stretch at 5–378 (RIFVNDDRHV…PMKRPMEEDG (374 aa)) folds into the DZF domain. Positions 50 to 86 (DEQEKGSSEQAESDNMDVPPEDDSKEGAGEQKTEHMT) are disordered. Over residues 60–73 (AESDNMDVPPEDDS) the composition is skewed to acidic residues. Ser62 is modified (phosphoserine). A compositionally biased stretch (basic and acidic residues) spans 74-86 (KEGAGEQKTEHMT). Lys100 carries the N6-acetyllysine modification. Thr188 is modified (phosphothreonine; by PKR). Ser190 is subject to Phosphoserine. Lys297 is covalently cross-linked (Glycyl lysine isopeptide (Lys-Gly) (interchain with G-Cter in ubiquitin)). Thr315 bears the Phosphothreonine; by PKR mark. Lys348 participates in a covalent cross-link: Glycyl lysine isopeptide (Lys-Gly) (interchain with G-Cter in SUMO1). The disordered stretch occupies residues 363-401 (TTYAITPMKRPMEEDGEEKSPSKKKKKIQKKEEKAEPPQ). Positions 371–389 (KRPMEEDGEEKSPSKKKKK) match the Bipartite nuclear localization signal motif. A compositionally biased stretch (basic and acidic residues) spans 372–383 (RPMEEDGEEKSP). Phosphoserine is present on residues Ser382 and Ser384. A Glycyl lysine isopeptide (Lys-Gly) (interchain with G-Cter in SUMO2) cross-link involves residue Lys396. Positions 398 to 467 (EPPQAMNALM…AVKVLQDMGL (70 aa)) constitute a DRBM 1 domain. Lys460 is modified (N6-acetyllysine). The segment at 466 to 524 (GLPTGAEGRDSSKGEDSAEETEAKPAVVAPAPVVEAVSTPSAAFPSDATAEQGPILTKH) is disordered. Residues 472–481 (EGRDSSKGED) are compositionally biased toward basic and acidic residues. Phosphoserine is present on residues Ser476, Ser477, and Ser482. A Glycyl lysine isopeptide (Lys-Gly) (interchain with G-Cter in SUMO2) cross-link involves residue Lys489. Residues 489–508 (KPAVVAPAPVVEAVSTPSAA) are compositionally biased toward low complexity. The region spanning 524–590 (HGKNPVMELN…ALAALEKLFP (67 aa)) is the DRBM 2 domain. Thr592 carries the post-translational modification Phosphothreonine. Positions 609 to 894 (RGGPKFAAKP…ADHSMNYQYR (286 aa)) are interaction with PRMT1. Disordered stretches follow at residues 625 to 660 (MGGP…FGGA) and 718 to 894 (QGDN…YQYR). The span at 644–660 (RGGSIRGRGRGRGFGGA) shows a compositional bias: gly residues. 2 stretches are compositionally biased toward low complexity: residues 743-770 (PSYG…YGPP) and 777-792 (YNHG…SYNS). Ser792, Ser810, Ser812, and Ser816 each carry phosphoserine. Composition is skewed to gly residues over residues 811 to 825 (GSGG…GSGG) and 832 to 851 (SHGG…GKQG). Residues 857–866 (NYNSPGSGQN) show a composition bias toward polar residues. The span at 867–878 (YSGPPSSYQSSQ) shows a compositional bias: low complexity.

As to quaternary structure, identified in a IGF2BP1-dependent mRNP granule complex containing untranslated mRNAs. Interacts with FUS and SMN. Interacts (via C-terminus) with PRMT1. Forms a complex with ILF2. Can also bind to PRKDC/XRCC7: this may stabilize the interaction of PRKDC/XRCC7 and the heterodimeric complex of XRCC6/KU70 and XRCC5/KU80. Forms a heteromeric complex with ZNF346 and ILF3. Found in a nuclear export complex with XPO5, ILF3, Ran and double-stranded RNA or double-stranded minihelix VA1 RNA. Found in a nuclear export complex with XPO5, RAN, ILF3, ZNF346 and double-stranded RNA. Interacts with XPO5 and ZNF346. Forms a complex with ILF2, YLPM1, KHDRBS1, RBMX, NCOA5 and PPP1CA. Interacts with AGO1 and AGO2. Interacts with DHX36; this interaction occurs in a RNA-dependent manner. Interacts with ELAVL1; this interaction occurs in a RNA-dependent manner. Interacts with HAVCR2; this interaction promotes ILF3 ubiquitination and subsequent degradation. Phosphorylated at Thr-188 and Thr-315 by PKR in response to certain RNA viruses. This phosphorylation results in the dissociation of ILF2 from the ILF2-ILF3 complex resulting in a cytoplasmic sequestration of ILF3 where it can bind to viral RNAs and impede viral replication. Post-translationally, methylated by protein arginine N-methyltransferase 1. In terms of processing, ubiquitinated at Lys-297 in a TRIM47-dependent manner; this 'Lys-48'-linked ubiquitination promotes ILF3 degradation. In terms of tissue distribution, ubiquitous.

It is found in the nucleus. The protein resides in the nucleolus. It localises to the cytoplasm. Functionally, RNA-binding protein that plays an essential role in the biogenesis of circular RNAs (circRNAs) which are produced by back-splicing circularization of pre-mRNAs. Within the nucleus, promotes circRNAs processing by stabilizing the regulatory elements residing in the flanking introns of the circularized exons. Plays thereby a role in the back-splicing of a subset of circRNAs. As a consequence, participates in a wide range of transcriptional and post-transcriptional processes. Binds to poly-U elements and AU-rich elements (AREs) in the 3'-UTR of target mRNAs. Upon viral infection, ILF3 accumulates in the cytoplasm and participates in the innate antiviral response. Mechanistically, ILF3 becomes phosphorylated and activated by the double-stranded RNA-activated protein kinase/PKR which releases ILF3 from cellular mature circRNAs. In turn, unbound ILF3 molecules are able to interact with and thus inhibit viral mRNAs. In terms of biological role, (Microbial infection) Plays a positive role in HIV-1 virus production by binding to and thereby stabilizing HIV-1 RNA, together with ILF3. The polypeptide is Interleukin enhancer-binding factor 3 (ILF3) (Homo sapiens (Human)).